We begin with the raw amino-acid sequence, 345 residues long: MAWRSGLCETDSRTLKQFLQEECMWKLVGKSRKHREYRAVACRSTIFSPEDDGSCILCQLLLFYRDGEWILCLCCNGRYQGHYGVGHVHRRRRRICHLPTLYQLSFGGPLGPASIDFLPSFSQVTSSMTCDGITPDVIYEVCMLVPQDEAKRILVKGHGAMDLTCQKAVTLGGAGAWLLPRPEGYTLFFYILCYDLFTSCGNRCDIPSMTRLMAAATACGQAGCSFCTDHEGHVDPTGNYVGCTPDMGRCLCYVPCGPMTQSLIHNEEPATFFCESDDAKYLCAVGSKTAAQVTLGDGLDYHIGVKDSEGRWLPVKTDVWDLVKVEEPVSRMIVCSCPVLKNLVH.

The interval 26 to 35 (KLVGKSRKHR) is nuclear localization signal 1. The tract at residues 55–63 (CILCQLLLF) is nuclear export signal. A nuclear localization signal 2 region spans residues 90–94 (RRRRR).

Belongs to the herpesviridae cytoplasmic envelopment protein 2 family. Interacts with cytoplasmic envelopment protein 3 and with the capsid. Interacts with host STING1; this interaction prevents viral DNA-triggered antiviral immune response.

Its subcellular location is the virion tegument. It is found in the host cytoplasm. The protein localises to the host nucleus. Functionally, plays a critical role in cytoplasmic virus egress. Participates in the final step of tegumentation and envelope acquisition within the host cytoplasm by directly interacting with the capsid. Upon virion binding to target cell, a signaling cascade is triggered to disrupt the interaction with the capsid, thereby preparing capsid uncoating. Additionally, antagonizes the viral DNA-triggered antiviral immune response by targeting host STING1 and preventing its dimerization and trafficking. The sequence is that of Cytoplasmic envelopment protein 2 (UL94) from Homo sapiens (Human).